The following is a 193-amino-acid chain: Phosphatidylglycerophosphatase and protein-tyrosine phosphatase 1 (193 aa).

The N-terminal 31 residues, 1 to 31 (MAASAWLEAGLARVLFYPTLLYTVFRGRVGG), are a transit peptide targeting the mitochondrion. Residues 37-188 (WYHRIDHTVL…LKEFHKEIAA (152 aa)) enclose the Tyrosine-protein phosphatase domain. Lysine 85 carries the post-translational modification N6-succinyllysine. Cysteine 132 (phosphocysteine intermediate) is an active-site residue.

Belongs to the protein-tyrosine phosphatase family. Non-receptor class dual specificity subfamily. Interacts with STYXL1; the interaction inhibits PTPMT1 catalytic activity. In terms of tissue distribution, expressed in liver and in pancreatic beta cells.

The protein resides in the mitochondrion inner membrane. It catalyses the reaction O-phospho-L-tyrosyl-[protein] + H2O = L-tyrosyl-[protein] + phosphate. It carries out the reaction O-phospho-L-seryl-[protein] + H2O = L-seryl-[protein] + phosphate. The enzyme catalyses O-phospho-L-threonyl-[protein] + H2O = L-threonyl-[protein] + phosphate. The catalysed reaction is a 1,2-diacyl-sn-glycero-3-phospho-(1'-sn-glycero-3'-phosphate) + H2O = a 1,2-diacyl-sn-glycero-3-phospho-(1'-sn-glycerol) + phosphate. It catalyses the reaction 1,2-di-(9Z-octadecenoyl)-sn-glycero-3-phospho-(1'-sn-glycerol-3'-phosphate) + H2O = 1,2-di-(9Z-octadecenoyl)-sn-glycero-3-phospho-(1'-sn-glycerol) + phosphate. It carries out the reaction 1,2-dioctanoyl-sn-glycero-3-phospho-(1D-myo-inositol-5-phosphate) + H2O = 1,2-dioctanoyl-sn-glycero-3-phospho-(1D-myo-inositol) + phosphate. The enzyme catalyses a 1-acyl-2-hexanoyl-sn-glycero-3-phospho-(1D-myo-inositol-5-phosphate) + H2O = a 1-acyl-2-hexanoyl-sn-glycero-3-phospho-(1D-myo-inositol) + phosphate. The catalysed reaction is 1,2-dibutyryl-sn-glycero-3-phospho-(1D-myo-inositol-5-phosphate) + H2O = 1,2-dibutyryl-sn-glycero-3-phospho-(1D-myo-inositol) + phosphate. It participates in phospholipid metabolism; phosphatidylglycerol biosynthesis; phosphatidylglycerol from CDP-diacylglycerol: step 2/2. Lipid phosphatase which dephosphorylates phosphatidylglycerophosphate (PGP) to phosphatidylglycerol (PG). PGP is an essential intermediate in the biosynthetic pathway of cardiolipin, a mitochondrial-specific phospholipid regulating the membrane integrity and activities of the organelle. Has also been shown to display phosphatase activity toward phosphoprotein substrates, specifically mediates dephosphorylation of mitochondrial proteins, thereby playing an essential role in ATP production. Has probably a preference for proteins phosphorylated on Ser and/or Thr residues compared to proteins phosphorylated on Tyr residues. Probably involved in regulation of insulin secretion in pancreatic beta cells. May prevent intrinsic apoptosis, probably by regulating mitochondrial membrane integrity. The protein is Phosphatidylglycerophosphatase and protein-tyrosine phosphatase 1 of Rattus norvegicus (Rat).